Consider the following 396-residue polypeptide: L-lactate dehydrogenase (396 aa).

The FMN hydroxy acid dehydrogenase domain occupies 1–380 (MIISAASDYR…TQDSLVQGLG (380 aa)). Tyrosine 24 provides a ligand contact to substrate. The FMN site is built by serine 106 and glutamine 127. Tyrosine 129 contacts substrate. Residue threonine 155 participates in FMN binding. Arginine 164 is a binding site for substrate. Residue lysine 251 coordinates FMN. The active-site Proton acceptor is the histidine 275. Arginine 278 is a substrate binding site. FMN is bound at residue 306-330 (DSGIRNGLDVVRMIALGADTVLLGR).

It belongs to the FMN-dependent alpha-hydroxy acid dehydrogenase family. FMN is required as a cofactor.

Its subcellular location is the cell inner membrane. It catalyses the reaction (S)-lactate + A = pyruvate + AH2. Catalyzes the conversion of L-lactate to pyruvate. Is coupled to the respiratory chain. This Shigella dysenteriae serotype 1 (strain Sd197) protein is L-lactate dehydrogenase.